Here is a 300-residue protein sequence, read N- to C-terminus: Pleckstrin homology domain-containing family A member 3 (300 aa).

In terms of domain architecture, PH spans 1 to 93 (MEGVLYKWTN…WLVALGSSKA (93 aa)). Residues 1-100 (MEGVLYKWTN…SKACLTDTRT (100 aa)) are interaction with SACM1L. The interval 97-300 (DTRTKKEKEI…SEDTLPSFSS (204 aa)) is interaction with VAPA and VAPB. The segment at 197–300 (PVSPSPVQMM…SEDTLPSFSS (104 aa)) is disordered. A phosphoserine mark is found at S236 and S244. A compositionally biased stretch (basic and acidic residues) spans 279–290 (EESRLMAKKQSE).

Interacts with GTP-bound ARF1. Interacts with SACM1L and VAPA and/or VAPB to form a ternary complex. In terms of tissue distribution, widely expressed.

The protein localises to the golgi apparatus. It localises to the trans-Golgi network membrane. Plays a role in regulation of vesicular cargo transport from the trans-Golgi network (TGN) to the plasma membrane. Regulates Golgi phosphatidylinositol 4-phosphate (PtdIns(4)P) levels and activates the PtdIns(4)P phosphatase activity of SACM1L when it binds PtdIns(4)P in 'trans' configuration. Binds preferentially to PtdIns(4)P. Negatively regulates APOB secretion from hepatocytes. The chain is Pleckstrin homology domain-containing family A member 3 (PLEKHA3) from Homo sapiens (Human).